A 2316-amino-acid chain; its full sequence is Receptor-type tyrosine-protein phosphatase zeta (2316 aa).

Positions 1–24 (MRILQSFLACVQLLCVCRLDWAYG) are cleaved as a signal peptide. The Extracellular segment spans residues 25-1637 (YYRQQRKLVE…LAEGLESEKK (1613 aa)). The 265-residue stretch at 36 to 300 (IGWSYTGALN…KFSRQVFSSY (265 aa)) folds into the Alpha-carbonic anhydrase domain. Disulfide bonds link Cys56-Cys240 and Cys133-Cys264. 7 N-linked (GlcNAc...) asparagine glycosylation sites follow: Asn105, Asn134, Asn223, Asn232, Asn324, Asn381, and Asn497. Residues 314 to 413 (EPENVQADPE…LIVDMPTEDA (100 aa)) enclose the Fibronectin type-III domain. Disordered stretches follow at residues 433-499 (YGKG…LNTS) and 518-537 (LPSQ…TSAS). Asn552 carries N-linked (GlcNAc...) asparagine glycosylation. Phosphoserine occurs at positions 572 and 576. Disordered regions lie at residues 586-624 (KLDS…TPEA) and 636-720 (RNAL…EMPH). Residues 592–602 (DDSSGSSPASS) are compositionally biased toward low complexity. Ser595 carries an O-linked (Xyl...) (chondroitin sulfate) serine glycan. Over residues 603–621 (TVPFSTDNLSHGYTSSSDT) the composition is skewed to polar residues. A glycan (N-linked (GlcNAc...) asparagine) is linked at Asn610. Ser645 carries the post-translational modification Phosphoserine; alternate. Residue Ser645 is glycosylated (O-linked (Xyl...) (chondroitin sulfate) serine; alternate). Phosphoserine is present on Ser647. Polar residues predominate over residues 666 to 675 (TDLTTQSETG). An N-linked (GlcNAc...) asparagine glycan is attached at Asn685. Polar residues predominate over residues 699–711 (ETFSPDATASRGP). A glycan (N-linked (GlcNAc...) asparagine) is linked at Asn786. O-linked (Xyl...) (chondroitin sulfate) serine glycosylation occurs at Ser1005. N-linked (GlcNAc...) asparagine glycans are attached at residues Asn1025 and Asn1058. Disordered stretches follow at residues 1141-1172 (QASG…SHPS), 1204-1228 (KTAL…SSSS), 1401-1521 (LLPS…DGRE), and 1545-1622 (TSDE…NSSH). Positions 1152–1172 (LSTNSEPALSDTASSEVSHPS) are enriched in polar residues. Polar residues predominate over residues 1401 to 1413 (LLPSKATSKPTHS). Acidic residues predominate over residues 1425 to 1439 (EDGDDYDDDDYDDID). Asn1463 carries an N-linked (GlcNAc...) asparagine glycan. Polar residues predominate over residues 1464 to 1478 (DSDTQESSLVDQSDP). O-linked (Xyl...) (chondroitin sulfate) serine glycans are attached at residues Ser1550 and Ser1552. Polar residues-rich tracts occupy residues 1555–1569 (GTSD…STDF) and 1595–1609 (PRSS…HSGV). A glycan (N-linked (GlcNAc...) asparagine) is linked at Asn1563. The segment covering 1610 to 1621 (SNSSEAEASNSS) has biased composition (low complexity). Asn1611 and Asn1619 each carry an N-linked (GlcNAc...) asparagine glycan. Residues 1638-1663 (AVIPLVIVSALTFICLVVLVGILIYW) traverse the membrane as a helical segment. At 1664 to 2316 (RKCFQTAHFY…NIAESLESLV (653 aa)) the chain is on the cytoplasmic side. 2 positions are modified to phosphothreonine: Thr1685 and Thr1688. 2 consecutive Tyrosine-protein phosphatase domains span residues 1718–1993 (FTEE…LVEA) and 2024–2283 (LEKQ…VLSL). Residues Asp1902, 1934–1940 (CSAGVGR), and Gln1978 contribute to the substrate site. Cys1934 (phosphocysteine intermediate) is an active-site residue. Ser2056 carries the post-translational modification Phosphoserine.

Belongs to the protein-tyrosine phosphatase family. Receptor class 5 subfamily. In terms of assembly, interacts with tenascin. Interacts with N-CAM and NG-CAM. The carbonic-anhydrase like domain interacts with CNTN1 (contactin). Interacts with PTN. Interaction with PTN promotes formation of homooligomers; oligomerization impairs phosphatase activity. Interacts (via chondroitin sulfate chains) with MDK (via C-terminal); this interaction is inhibited by PTN; this interaction promotes neuronal migration. Nervous tissue specific.

Its subcellular location is the cell membrane. It is found in the secreted. It catalyses the reaction O-phospho-L-tyrosyl-[protein] + H2O = L-tyrosyl-[protein] + phosphate. Protein tyrosine phosphatase that negatively regulates oligodendrocyte precursor proliferation in the embryonic spinal cord. Required for normal differentiation of the precursor cells into mature, fully myelinating oligodendrocytes. May play a role in protecting oligondendrocytes against apoptosis. May play a role in the establishment of contextual memory, probably via the dephosphorylation of proteins that are part of important signaling cascades. Its function is as follows. Isoform 3 (phosphacan), previously designated 3F8 chondroitin sulfate proteoglycan or 3H1 keratan sulfate proteoglycan depending on the glycosylation status, is a soluble nervous tissue-specific proteoglycan. It is synthesized by glia and binds to neurons and to the neural cell adhesion molecules tenascin, N-CAM or NG-CAM but not to laminin and fibronectin. Phosphacan acts as a potent inhibitor of cell adhesion and neurite outgrowth. This chain is Receptor-type tyrosine-protein phosphatase zeta (Ptprz1), found in Rattus norvegicus (Rat).